Here is a 118-residue protein sequence, read N- to C-terminus: MHTLDSLDAESLRTDVPEFWPGDTLKVHVRVVEGNRQRIQVFQGAVIRRQGGGVRETFTVRKVSFGVGVERTFPLHSPIVSKIEIVTRGDVRRAKLYYLRQLRGKAAKIKEKRDPISR.

It belongs to the bacterial ribosomal protein bL19 family.

Functionally, this protein is located at the 30S-50S ribosomal subunit interface and may play a role in the structure and function of the aminoacyl-tRNA binding site. The sequence is that of Large ribosomal subunit protein bL19 from Frankia alni (strain DSM 45986 / CECT 9034 / ACN14a).